We begin with the raw amino-acid sequence, 124 residues long: Small ribosomal subunit protein uS12 (124 aa).

The disordered stretch occupies residues 1–28; it reads MPTIQQLIRTERQSSKAKTKSPALKSCP. Aspartate 89 is modified (3-methylthioaspartic acid). The disordered stretch occupies residues 104–124; sequence TAGVKDRRQSRSKYGAKTPKE.

It belongs to the universal ribosomal protein uS12 family. As to quaternary structure, part of the 30S ribosomal subunit. Contacts proteins S8 and S17. May interact with IF1 in the 30S initiation complex.

With S4 and S5 plays an important role in translational accuracy. Its function is as follows. Interacts with and stabilizes bases of the 16S rRNA that are involved in tRNA selection in the A site and with the mRNA backbone. Located at the interface of the 30S and 50S subunits, it traverses the body of the 30S subunit contacting proteins on the other side and probably holding the rRNA structure together. The combined cluster of proteins S8, S12 and S17 appears to hold together the shoulder and platform of the 30S subunit. The chain is Small ribosomal subunit protein uS12 from Synechococcus sp. (strain WH7803).